We begin with the raw amino-acid sequence, 133 residues long: ATP synthase epsilon chain (133 aa).

This sequence belongs to the ATPase epsilon chain family. F-type ATPases have 2 components, CF(1) - the catalytic core - and CF(0) - the membrane proton channel. CF(1) has five subunits: alpha(3), beta(3), gamma(1), delta(1), epsilon(1). CF(0) has three main subunits: a, b and c.

It localises to the cellular thylakoid membrane. Functionally, produces ATP from ADP in the presence of a proton gradient across the membrane. The polypeptide is ATP synthase epsilon chain (Prochlorococcus marinus (strain MIT 9303)).